Reading from the N-terminus, the 381-residue chain is Chorismate synthase (381 aa).

Residues Arg39 and Arg45 each coordinate NADP(+). Residues 127–129 (RAS), 248–249 (QS), Gly293, 308–312 (KPIPT), and Arg334 contribute to the FMN site.

The protein belongs to the chorismate synthase family. In terms of assembly, homotetramer. It depends on FMNH2 as a cofactor.

It carries out the reaction 5-O-(1-carboxyvinyl)-3-phosphoshikimate = chorismate + phosphate. Its pathway is metabolic intermediate biosynthesis; chorismate biosynthesis; chorismate from D-erythrose 4-phosphate and phosphoenolpyruvate: step 7/7. Functionally, catalyzes the anti-1,4-elimination of the C-3 phosphate and the C-6 proR hydrogen from 5-enolpyruvylshikimate-3-phosphate (EPSP) to yield chorismate, which is the branch point compound that serves as the starting substrate for the three terminal pathways of aromatic amino acid biosynthesis. This reaction introduces a second double bond into the aromatic ring system. This is Chorismate synthase from Caldicellulosiruptor saccharolyticus (strain ATCC 43494 / DSM 8903 / Tp8T 6331).